The following is a 166-amino-acid chain: MEERENIKEIRVGIADLNTAFSPNRIITVGLGSCIGIAIYDSKNKLGGLSHIMLPDSTQFSKVTNPYKFADLAIPILIKKMEGMGANIRNMKAKIAGGASMFNFSDKNMNMDIGNRNGISVKKVLKELNVPLLSQDIGGNKGRTMIFNTLDGSVDIRTVGMGIRKI.

This sequence belongs to the CheD family.

The catalysed reaction is L-glutaminyl-[protein] + H2O = L-glutamyl-[protein] + NH4(+). Probably deamidates glutamine residues to glutamate on methyl-accepting chemotaxis receptors (MCPs), playing an important role in chemotaxis. This is Probable chemoreceptor glutamine deamidase CheD from Clostridium acetobutylicum (strain ATCC 824 / DSM 792 / JCM 1419 / IAM 19013 / LMG 5710 / NBRC 13948 / NRRL B-527 / VKM B-1787 / 2291 / W).